The following is a 211-amino-acid chain: Protein-methionine-sulfoxide reductase heme-binding subunit MsrQ (211 aa).

The next 6 membrane-spanning stretches (helical) occupy residues valine 8–tryptophan 28, phenylalanine 54–isoleucine 74, leucine 82–valine 102, proline 116–threonine 136, phenylalanine 153–serine 173, and isoleucine 178–phenylalanine 198.

Belongs to the MsrQ family. In terms of assembly, heterodimer of a catalytic subunit (MsrP) and a heme-binding subunit (MsrQ). It depends on FMN as a cofactor. Heme b serves as cofactor.

It is found in the cell inner membrane. In terms of biological role, part of the MsrPQ system that repairs oxidized periplasmic proteins containing methionine sulfoxide residues (Met-O), using respiratory chain electrons. Thus protects these proteins from oxidative-stress damage caused by reactive species of oxygen and chlorine generated by the host defense mechanisms. MsrPQ is essential for the maintenance of envelope integrity under bleach stress, rescuing a wide series of structurally unrelated periplasmic proteins from methionine oxidation, including the primary periplasmic chaperone SurA and the lipoprotein Pal. MsrQ provides electrons for reduction to the reductase catalytic subunit MsrP, using the quinone pool of the respiratory chain. The protein is Protein-methionine-sulfoxide reductase heme-binding subunit MsrQ of Shigella flexneri.